Here is a 178-residue protein sequence, read N- to C-terminus: uncharacterized protein (178 aa).

This is an uncharacterized protein from Cestrum parqui (CmYLCV).